We begin with the raw amino-acid sequence, 565 residues long: Tetratricopeptide repeat protein 39A (565 aa).

TPR repeat units follow at residues 271–304, 461–494, and 502–535; these read AIFLFFAGRAEEIKGNIDEAVALFEDGCKAQQVW, CLIQLLKGLCLKNQGQMQAAEDCFNQVYISEKKL, and PNALLEMSLLFIDTGRKEQAIKLLQKAKNNYKVY.

The protein belongs to the TTC39 family.

This is Tetratricopeptide repeat protein 39A (ttc39a) from Danio rerio (Zebrafish).